The sequence spans 290 residues: Ribosomal RNA small subunit methyltransferase A (290 aa).

6 residues coordinate S-adenosyl-L-methionine: Asn-27, Leu-29, Gly-54, Glu-75, Asp-100, and Asn-125.

This sequence belongs to the class I-like SAM-binding methyltransferase superfamily. rRNA adenine N(6)-methyltransferase family. RsmA subfamily.

The protein localises to the cytoplasm. It carries out the reaction adenosine(1518)/adenosine(1519) in 16S rRNA + 4 S-adenosyl-L-methionine = N(6)-dimethyladenosine(1518)/N(6)-dimethyladenosine(1519) in 16S rRNA + 4 S-adenosyl-L-homocysteine + 4 H(+). Its function is as follows. Specifically dimethylates two adjacent adenosines (A1518 and A1519) in the loop of a conserved hairpin near the 3'-end of 16S rRNA in the 30S particle. May play a critical role in biogenesis of 30S subunits. The chain is Ribosomal RNA small subunit methyltransferase A from Streptococcus pyogenes serotype M1.